Here is a 266-residue protein sequence, read N- to C-terminus: Glutamate racemase (266 aa).

Residues 10–11 and 42–43 contribute to the substrate site; these read DS and YG. Catalysis depends on cysteine 73, which acts as the Proton donor/acceptor. 74–75 lines the substrate pocket; that stretch reads NT. The Proton donor/acceptor role is filled by cysteine 183. Position 184-185 (184-185) interacts with substrate; that stretch reads TH.

It belongs to the aspartate/glutamate racemases family.

The enzyme catalyses L-glutamate = D-glutamate. Its pathway is cell wall biogenesis; peptidoglycan biosynthesis. Its function is as follows. Provides the (R)-glutamate required for cell wall biosynthesis. In Lactobacillus johnsonii (strain CNCM I-12250 / La1 / NCC 533), this protein is Glutamate racemase.